A 140-amino-acid polypeptide reads, in one-letter code: Putative esterase MT1895 (140 aa).

This sequence belongs to the thioesterase PaaI family.

The chain is Putative esterase MT1895 from Mycobacterium tuberculosis (strain CDC 1551 / Oshkosh).